Reading from the N-terminus, the 625-residue chain is tRNA uridine 5-carboxymethylaminomethyl modification enzyme MnmG (625 aa).

13 to 18 (GGGHAG) is an FAD binding site. 273 to 287 (GPRYCPSIEDKVVRF) serves as a coordination point for NAD(+).

It belongs to the MnmG family. Homodimer. Heterotetramer of two MnmE and two MnmG subunits. FAD serves as cofactor.

It is found in the cytoplasm. Its function is as follows. NAD-binding protein involved in the addition of a carboxymethylaminomethyl (cmnm) group at the wobble position (U34) of certain tRNAs, forming tRNA-cmnm(5)s(2)U34. This chain is tRNA uridine 5-carboxymethylaminomethyl modification enzyme MnmG, found in Methylococcus capsulatus (strain ATCC 33009 / NCIMB 11132 / Bath).